A 367-amino-acid polypeptide reads, in one-letter code: MNTTANPSNIIVGLSGGVDSSVTAALLKQQGYQVRGVFMQNWEDDDNDEYCSIKQDSFDAIAVADIIGIDIDIVNFAAQYKDKVFAYFLQEYSAGRTPNPDVLCNAEIKFKCFLDYAVGQGADTIATGHYARKEVRNGVHYLLKGLDRNKDQSYFLYRLKPFQLERAIFPLGGLEKPEVRRLAAEFNLPTAAKKDSTGICFIGERPFREFLQKYLPTDNGKMVTPEGKTVGEHVGLMFYTLGQRKGLGIGGAGEPWFVAAKDLTKNELIVVQGHDHPLLYTRSLVMNDLSFTLPERPKAGRYTCKTRYRMADAPCELRYLDEETAELVFDEPQWAVTPGQSAVLYDGDICLGGGIIQTTDKPVIITR.

ATP-binding positions include 13 to 20 and Met39; that span reads GLSGGVDS. Positions 99-101 are interaction with target base in tRNA; sequence NPD. Cys104 serves as the catalytic Nucleophile. An intrachain disulfide couples Cys104 to Cys200. Residue Gly128 participates in ATP binding. Residues 150–152 form an interaction with tRNA region; it reads KDQ. Cys200 functions as the Cysteine persulfide intermediate in the catalytic mechanism. The interval 307-308 is interaction with tRNA; it reads RY.

This sequence belongs to the MnmA/TRMU family.

It is found in the cytoplasm. The enzyme catalyses S-sulfanyl-L-cysteinyl-[protein] + uridine(34) in tRNA + AH2 + ATP = 2-thiouridine(34) in tRNA + L-cysteinyl-[protein] + A + AMP + diphosphate + H(+). In terms of biological role, catalyzes the 2-thiolation of uridine at the wobble position (U34) of tRNA, leading to the formation of s(2)U34. This Neisseria meningitidis serogroup C / serotype 2a (strain ATCC 700532 / DSM 15464 / FAM18) protein is tRNA-specific 2-thiouridylase MnmA.